Reading from the N-terminus, the 449-residue chain is Cyclin-B1-1 (449 aa).

2 disordered regions span residues 1–34 (MATR…VAGR) and 90–143 (AVAP…SVRK). 2 stretches are compositionally biased toward low complexity: residues 90 to 102 (AVAP…PAQR) and 121 to 134 (EISS…RQQS).

It belongs to the cyclin family. Cyclin AB subfamily.

The polypeptide is Cyclin-B1-1 (CYCB1-1) (Oryza sativa subsp. japonica (Rice)).